Consider the following 729-residue polypeptide: NAD(P)H-quinone oxidoreductase subunit 5, chloroplastic (729 aa).

18 helical membrane-spanning segments follow: residues 9 to 29, 39 to 59, 87 to 107, 125 to 145, 147 to 167, 184 to 204, 218 to 238, 258 to 278, 289 to 311, 327 to 347, 354 to 374, 395 to 415, 425 to 445, 540 to 560, 592 to 612, 627 to 646, 676 to 696, and 708 to 728; these read WIIP…SFFF, LCAL…LAIF, FLVD…GVLV, YAYL…PNLI, LYVF…FWFA, IGDF…GSFE, IGFS…AGPV, TPIS…FFIA, LVMQ…LALA, LGYM…FHLV, ALLF…VGYS, GTTF…ACFW, WLSS…TAFY, FSLV…INLI, ILLN…FSFI, LVGF…SWSL, YGID…GEFI, and LFII…FLPF.

It belongs to the complex I subunit 5 family. NDH is composed of at least 16 different subunits, 5 of which are encoded in the nucleus.

The protein resides in the plastid. The protein localises to the chloroplast thylakoid membrane. The enzyme catalyses a plastoquinone + NADH + (n+1) H(+)(in) = a plastoquinol + NAD(+) + n H(+)(out). It catalyses the reaction a plastoquinone + NADPH + (n+1) H(+)(in) = a plastoquinol + NADP(+) + n H(+)(out). In terms of biological role, NDH shuttles electrons from NAD(P)H:plastoquinone, via FMN and iron-sulfur (Fe-S) centers, to quinones in the photosynthetic chain and possibly in a chloroplast respiratory chain. The immediate electron acceptor for the enzyme in this species is believed to be plastoquinone. Couples the redox reaction to proton translocation, and thus conserves the redox energy in a proton gradient. This chain is NAD(P)H-quinone oxidoreductase subunit 5, chloroplastic (ndhF), found in Adiantum capillus-veneris (Maidenhair fern).